Consider the following 411-residue polypeptide: D-galactonate dehydratase family member SBI_01856 (411 aa).

2 residues coordinate substrate: asparagine 45 and histidine 130. Tyrosine 167 functions as the Proton donor/acceptor in the catalytic mechanism. Residue aspartate 219 coordinates Mg(2+). The active-site Proton donor/acceptor is histidine 221. Positions 245 and 271 each coordinate Mg(2+). Residues glutamate 271, arginine 292, histidine 321, aspartate 325, and glutamate 348 each coordinate substrate.

Belongs to the mandelate racemase/muconate lactonizing enzyme family. GalD subfamily. Requires Mg(2+) as cofactor.

It carries out the reaction D-gluconate = 2-dehydro-3-deoxy-D-gluconate + H2O. Has low D-gluconate dehydratase activity (in vitro), suggesting that it has no significant role in D-gluconate degradation in vivo. Has no detectable activity with a panel of 70 other acid sugars (in vitro). This is D-galactonate dehydratase family member SBI_01856 from Streptomyces bingchenggensis (strain BCW-1).